A 407-amino-acid polypeptide reads, in one-letter code: (R)-phenyllactyl-CoA dehydratase alpha subunit (407 aa).

Positions 1-4 (MSDR) are excised as a propeptide.

It belongs to the FldB/FldC dehydratase alpha/beta subunit family. As to quaternary structure, part of the heterotrimeric phenyllactate dehydratase complex FldABC, composed of (R)-phenyllactate CoA-transferase (FldA) and a heterodimeric (R)-phenyllactyl-CoA dehydratase (FldB and FldC). The cofactor is [4Fe-4S] cluster. No flavin could be detected in the FldABC complex, and the addition of FAD, FMN or riboflavin to the dehydratase do not increase enzymatic activity. is required as a cofactor.

It carries out the reaction (R)-3-phenyllactoyl-CoA = (E)-cinnamoyl-CoA + H2O. It catalyses the reaction (R)-3-(4-hydroxyphenyl)lactoyl-CoA = (E)-4-coumaroyl-CoA + H2O. The enzyme catalyses (R)-3-(indol-3-yl)lactoyl-CoA = (E)-3-(indol-3-yl)acryloyl-CoA + H2O. Its pathway is amino-acid degradation; L-phenylalanine degradation. In terms of biological role, component of the phenyllactate dehydratase complex FldABC that is involved in the fermentation of L-phenylalanine via a Stickland reaction. This complex catalyzes the reversible syn-dehydration of (R)-phenyllactate to (E)-cinnamate in two steps, a CoA-transfer from cinnamoyl-CoA to phenyllactate, catalyzed by FldA, followed by the dehydration of phenyllactyl-CoA to cinnamoyl-CoA, catalyzed by FldB and FldC. Requires the activator FldI to initiate catalysis. The protein is (R)-phenyllactyl-CoA dehydratase alpha subunit of Clostridium sporogenes.